The chain runs to 1106 residues: Probable ATP-citrate synthase (1106 aa).

Residues N358, T360, and R391 each contribute to the citrate site. Residues 442–459 (APQTTGQFLLSPERNTGG) are compositionally biased toward polar residues. The disordered stretch occupies residues 442–478 (APQTTGQFLLSPERNTGGTERAPPSPAANATPTEHPL). ATP is bound by residues 701-721 (VIRY…EVGG) and 752-778 (ITSE…KNAA). E718 is a binding site for Mg(2+). The active-site Tele-phosphohistidine intermediate is the H760. Residue 779–789 (LRASGALVPES) coordinates CoA.

It in the N-terminal section; belongs to the succinate/malate CoA ligase beta subunit family. The protein in the C-terminal section; belongs to the succinate/malate CoA ligase alpha subunit family. Homotetramer.

It is found in the cytoplasm. The catalysed reaction is oxaloacetate + acetyl-CoA + ADP + phosphate = citrate + ATP + CoA. Catalyzes the cleavage of citrate into oxaloacetate and acetyl-CoA, the latter serving as common substrate in multiple biochemical reactions in protein, carbohydrate and lipid metabolism. The chain is Probable ATP-citrate synthase from Caenorhabditis elegans.